Consider the following 1029-residue polypeptide: MKFYALFIYRPVATILLSIAVTLCGVLGFRLLPVAPLPQVDFPVIMVSASLPGASPETMASSVATPLERSLGRIAGVNEMTSTSSLGSTRIILEFNFDRDINGAARDVQAAINAAQSLLPSGMPSRPTYRKANPSDAPIMILTLTSDTFSQGELYDYASTQLAQTIAQIDGVGDVDVGGSSLPAVRVALNPQALFNQGVSLDTVRSAISNANVRRPQGAIEDAQRRWQLQTNDELKTAAEYEPLIVHYNNGAAVHLRDVATVTDSVQDVRNAGMTNAKPAILLMIRKLPEANIIETVDRIRAALPELRDTIPAAIDMQIAQDRSPTIRASLAEVEQSLAISVGLVILVVFLFLRSGRATLIPAVAVPVSLIGTFAAMYLCGFSLNNLSLMALTIATGFVVDDAIVALENISRHLEAGVKPLQAALQGVREVGFTVLSMSLSLVAVFLPLLLMGGLPGRLFREFAVTLSVAIGISLVVSLTLTPMMCGWLLKAKPSEETRSRVGINRLLLALQGGYARSLGWVLNHARLVGLVLLATIALNVWLYISIPKTFFPEQDTGRLMGGIQADQSISFQAMRGKLQDFMKIIREDPAVDNVTGFTGGSRVNSGMMFISLKPLGERTESAQQVIDRLRKKLAREPGASLFLMAVQDIRVGGRQSNASYQYTLLSDDLAALREWEPKIRQALAKLPQLADVNSDQQDNGAEMSLVYDRESMARLGISVQDANSLLNNAFGQRQISTIYQPLNQYKVVMEVDPRYTQDISALDQMFVMNSEGKPIPLSWFAKWQPANAPLSVNHQGLSAASTIAFNLPTGVSLSEASDAITRTMTSLGVPSSVRGSFAGTAQVFQETMNSQVILILAAIATVYIVLGMLYESYVHPLTILSTLPSAGVGALLALEAFDAPFSLIALIGIMLLIGIVKKNAIMMVDFALEAQRSGQLSARDAIFQACLLRFRPIMMTTLAALFGALPLMIASGDGAELRQPLGITIVGGLVMSQLLTLYTTPVVYLFFDRLRLRFTRRAKPEDTLTASE.

The next 11 helical transmembrane spans lie at 15 to 35, 333 to 353, 360 to 380, 387 to 407, 431 to 451, 469 to 489, 528 to 548, 853 to 873, 897 to 917, 953 to 973, and 984 to 1004; these read ILLS…LPVA, EVEQ…FLFL, LIPA…MYLC, LSLM…IVAL, VGFT…PLLL, VAIG…CGWL, LVGL…ISIP, VILI…LYES, AFDA…IGIV, PIMM…IASG, and ITIV…TPVV.

Belongs to the resistance-nodulation-cell division (RND) (TC 2.A.6) family. MdtC subfamily. As to quaternary structure, part of a tripartite efflux system composed of MdtA, MdtB and MdtC. MdtC forms a heteromultimer with MdtB.

Its subcellular location is the cell inner membrane. The chain is Multidrug resistance protein MdtC from Cronobacter sakazakii (strain ATCC BAA-894) (Enterobacter sakazakii).